The primary structure comprises 164 residues: MHGNSLQYVKLSEHASGLIRGSAGAAGYDLAAAHPVVVPSFGRALVKTDLAVKMPPGLYGRVAPRSGLALKKFIDVGAGVVDPDYRGNLGVILFNFGCDPFRVKRGDRIAQLVLERYESPPILEVDSLDSTDRGDAGYGSTGVGNWHSALWEGFSSGDLKESFV.

65–67 is a substrate binding site; sequence RSG. At Lys71 the chain carries N6-acetyllysine; by host. Substrate is bound by residues 79–82, Gly90, and 138–139; these read GVVD and YG.

The protein belongs to the dUTPase family. Requires Mg(2+) as cofactor.

The enzyme catalyses dUTP + H2O = dUMP + diphosphate + H(+). In terms of biological role, this enzyme is involved in nucleotide metabolism: it produces dUMP, the immediate precursor of thymidine nucleotides and it decreases the intracellular concentration of dUTP so that uracil cannot be incorporated into DNA. In Dryophytes versicolor (chameleon treefrog), this protein is Putative deoxyuridine 5'-triphosphate nucleotidohydrolase.